The following is a 1758-amino-acid chain: Condensin-2 complex subunit hcp-6 (1758 aa).

4 disordered regions span residues 428–501, 969–1008, 1379–1460, and 1500–1656; these read DPGA…KAKE, ENGS…KGGM, QKRL…ARLL, and SKQA…LSRG. Residues 438–462 are compositionally biased toward acidic residues; the sequence is EQNEEEDEEEEGEDEEEEEENEQDD. Positions 463 to 473 are enriched in basic and acidic residues; it reads VAVKEEEQSDK. Positions 474 to 484 are enriched in acidic residues; the sequence is SDEENDGDNEE. Basic and acidic residues predominate over residues 485–501; the sequence is NVSKKKEEKKKEKKAKE. Residues 969–979 are compositionally biased toward polar residues; it reads ENGSSDASTVN. The span at 999–1008 shows a compositional bias: low complexity; it reads SSQKSSKGGM. Residues 1326–1385 adopt a coiled-coil conformation; that stretch reads CIEHKNDIDEILQDNRQLKDEMMFELQRVKQRTEEANRILDEYLKRVAEFKKQQKRLSKS. Residues 1414–1423 are compositionally biased toward acidic residues; it reads EDQENVEEEV. 2 stretches are compositionally biased toward basic and acidic residues: residues 1424–1437 and 1500–1512; these read EMRT…DADV and SKQA…KTIV. Polar residues-rich tracts occupy residues 1602 to 1618 and 1640 to 1651; these read ISAN…QSTE and VPTSSSGNTEND.

In terms of assembly, component of the condensin-2 complex.

Its subcellular location is the nucleus. It localises to the chromosome. It is found in the centromere. Chromosomal protein which is recruited to mitotic chromosomes by hcp-3 (CENP-A) and hcp-4 (CENP-C). Involved in chromosome segregation during mitosis, playing a role in chromosome condensation and in maintaining chromosome morphology, rigidity and orientation during mitosis. The chain is Condensin-2 complex subunit hcp-6 from Caenorhabditis elegans.